The chain runs to 465 residues: Auxin transporter-like protein 3 (465 aa).

Over 1–52 (MTSEKVETVVAGNYLEMEREEEGSKSTTGKLSKFFWHGGSVYDAWFSCASNQ) the chain is Cytoplasmic. A helical transmembrane segment spans residues 53–70 (VAQVLLTLPYSFSQLGML). The Extracellular portion of the chain corresponds to 71–72 (SG). Residues 73 to 93 (ILFQIFYGLMGSWTAYIISVL) form a helical membrane-spanning segment. Topologically, residues 94–129 (YVEYRTRKEREKVDFRNHVIQWFEVLDGLLGKHWRN) are cytoplasmic. The helical transmembrane segment at 130–150 (LGLFFNCTFLLFGSVIQLIAC) threads the bilayer. Over 151-165 (ASNIYYINDHLDKRT) the chain is Extracellular. The chain crosses the membrane as a helical span at residues 166–186 (WTYIFGACCATTVFIPSFHNY). The Cytoplasmic portion of the chain corresponds to 187 to 189 (RIW). Residues 190–210 (SFLGLVMTTYTAWYMTIASIL) traverse the membrane as a helical segment. Residues 211–225 (HGQAEDVKHSGPTKL) are Extracellular-facing. A helical membrane pass occupies residues 226–246 (VLYFTGATNILYTFGGHAVTV). Over 247–259 (EIMHAMWKPQKFK) the chain is Cytoplasmic. A helical transmembrane segment spans residues 260-280 (MIYLIATLYVMTLTLPSAAAV). At 281-307 (YWAFGDNLLTHSNALSLLPRTGFRDTA) the chain is on the extracellular side. A helical transmembrane segment spans residues 308-328 (VILMLIHQFITFGFACTPLYF). Topologically, residues 329–349 (VWEKFLGVHETKSLLKRALVR) are cytoplasmic. A helical membrane pass occupies residues 350–370 (LPVVIPIWFLAIIFPFFGPIN). Topologically, residues 371–374 (STVG) are extracellular. Residues 375–395 (SLLVSFTVYIIPALAHMVTFA) form a helical membrane-spanning segment. The Cytoplasmic portion of the chain corresponds to 396–421 (SAPARENAVERPPSFLGGWVGLYSVN). A helical membrane pass occupies residues 422 to 442 (VFVAVWVLVVGFGLGGWASML). Residues 443–465 (NFVHQIKTFGLFAKCFQCPPHKA) lie on the Extracellular side of the membrane.

This sequence belongs to the amino acid/polyamine transporter 2 family. Amino acid/auxin permease (AAAP) (TC 2.A.18.1) subfamily. In terms of tissue distribution, shoots and roots of nodulating plants. Low levels in roots, nodules, stems, petioles, leaves, shoot apices and flowers.

The protein resides in the cell membrane. In terms of biological role, carrier protein involved in proton-driven auxin influx. Mediates the formation of auxin gradient from developing leaves (site of auxin biosynthesis) to tips by contributing to the loading of auxin in vascular tissues and facilitating acropetal (base to tip) auxin transport within inner tissues of the root apex, and basipetal (tip to base) auxin transport within outer tissues of the root apex. May be involved in lateral roots and nodules formation. This Medicago truncatula (Barrel medic) protein is Auxin transporter-like protein 3 (LAX3).